The following is a 410-amino-acid chain: Tryptophan synthase beta chain (410 aa).

Position 98 is an N6-(pyridoxal phosphate)lysine (lysine 98).

It belongs to the TrpB family. Tetramer of two alpha and two beta chains. It depends on pyridoxal 5'-phosphate as a cofactor.

It carries out the reaction (1S,2R)-1-C-(indol-3-yl)glycerol 3-phosphate + L-serine = D-glyceraldehyde 3-phosphate + L-tryptophan + H2O. The protein operates within amino-acid biosynthesis; L-tryptophan biosynthesis; L-tryptophan from chorismate: step 5/5. The beta subunit is responsible for the synthesis of L-tryptophan from indole and L-serine. This is Tryptophan synthase beta chain from Dinoroseobacter shibae (strain DSM 16493 / NCIMB 14021 / DFL 12).